Reading from the N-terminus, the 135-residue chain is Large ribosomal subunit protein eL27y (135 aa).

Belongs to the eukaryotic ribosomal protein eL27 family.

The polypeptide is Large ribosomal subunit protein eL27y (RPL27B) (Arabidopsis thaliana (Mouse-ear cress)).